The chain runs to 188 residues: Elongation factor P (188 aa).

This sequence belongs to the elongation factor P family.

It is found in the cytoplasm. It functions in the pathway protein biosynthesis; polypeptide chain elongation. In terms of biological role, involved in peptide bond synthesis. Stimulates efficient translation and peptide-bond synthesis on native or reconstituted 70S ribosomes in vitro. Probably functions indirectly by altering the affinity of the ribosome for aminoacyl-tRNA, thus increasing their reactivity as acceptors for peptidyl transferase. This chain is Elongation factor P, found in Rhodopseudomonas palustris (strain HaA2).